The primary structure comprises 644 residues: Exoribonuclease 2 (644 aa).

The RNB domain occupies 189–516 (RQDLTALNFV…NHRLLKAVIK (328 aa)). Positions 561–643 (NTRFAAEIID…ETRSIIARPA (83 aa)) constitute an S1 motif domain.

Belongs to the RNR ribonuclease family. RNase II subfamily.

The protein localises to the cytoplasm. The catalysed reaction is Exonucleolytic cleavage in the 3'- to 5'-direction to yield nucleoside 5'-phosphates.. In terms of biological role, involved in mRNA degradation. Hydrolyzes single-stranded polyribonucleotides processively in the 3' to 5' direction. The polypeptide is Exoribonuclease 2 (Salmonella typhi).